The following is a 166-amino-acid chain: Outer membrane protein assembly factor BamE (166 aa).

The signal sequence occupies residues M1–A18. C19 is lipidated: N-palmitoyl cysteine. C19 carries S-diacylglycerol cysteine lipidation. Residues L143–E166 form a disordered region.

The protein belongs to the BamE family. Part of the Bam complex.

The protein localises to the cell outer membrane. Functionally, part of the outer membrane protein assembly complex, which is involved in assembly and insertion of beta-barrel proteins into the outer membrane. The polypeptide is Outer membrane protein assembly factor BamE (Methylomonas methanica (strain DSM 25384 / MC09)).